We begin with the raw amino-acid sequence, 396 residues long: MAETSVRNFNINFGPQHPAAHGVLRLVLELDGEVVDRVDPHIGLLHRGTEKLIEAKTYLQAVPYLDRLDYCAPMNQEHAFALAAERLLGIEVPKRGQLIRVLYCEIGRIMSHILNVTTQAMDVGALTPPLWGFVEREKLMVFYERASGSRMHAAYFRPGGVHQDLPRQLVEDIGKWIDPFLKSIDDLDRLLTGNRIFKQRNVDIGIVSLADAWAWGFSGVMVRGSGAAWDLRKSQPYECYSEMDFDIPIGKNGDCYDRYLVRMEEMRQSARIMRQCVDLLLGKESTGPVSNLDGKVVPPKRAAMKRSMEALIHHFKLYTEGYRVPAGEVYAAVEAPKGEFGVYLVSDGTNKPYRCKLRAPGFAHLQAMDFLCRGHLLADVTAVLGSLDIVFGEVDR.

Belongs to the complex I 49 kDa subunit family. In terms of assembly, NDH-1 is composed of 14 different subunits. Subunits NuoB, C, D, E, F, and G constitute the peripheral sector of the complex.

The protein resides in the cell inner membrane. It carries out the reaction a quinone + NADH + 5 H(+)(in) = a quinol + NAD(+) + 4 H(+)(out). In terms of biological role, NDH-1 shuttles electrons from NADH, via FMN and iron-sulfur (Fe-S) centers, to quinones in the respiratory chain. The immediate electron acceptor for the enzyme in this species is believed to be ubiquinone. Couples the redox reaction to proton translocation (for every two electrons transferred, four hydrogen ions are translocated across the cytoplasmic membrane), and thus conserves the redox energy in a proton gradient. The polypeptide is NADH-quinone oxidoreductase subunit D (Mesorhizobium japonicum (strain LMG 29417 / CECT 9101 / MAFF 303099) (Mesorhizobium loti (strain MAFF 303099))).